The sequence spans 585 residues: Beta-(1--&gt;2)glucan export ATP-binding/permease protein NdvA (585 aa).

The 281-residue stretch at 21-301 (VGAIVIANIV…MKAFATQIFE (281 aa)) folds into the ABC transmembrane type-1 domain. Transmembrane regions (helical) follow at residues 22-42 (GAIV…PILF), 55-75 (VAPM…AFVL), 136-156 (QHLA…AMDV), 158-178 (LSLI…VVMS), 245-265 (LNRI…TVLV), and 269-289 (ELGV…IGRL). An ABC transporter domain is found at 335 to 569 (VEFRDISFDF…NGRFAALLRA (235 aa)). 368–375 (GPTGAGKT) serves as a coordination point for ATP.

This sequence belongs to the ABC transporter superfamily. Beta-(1--&gt;2)glucan exporter (TC 3.A.1.108.1) family. Homodimer.

It localises to the cell inner membrane. It carries out the reaction [(1-&gt;2)-beta-D-glucosyl](n)(in) + ATP + H2O = [(1-&gt;2)-beta-D-glucosyl](n)(out) + ADP + phosphate + H(+). Its function is as follows. Involved in beta-(1--&gt;2)glucan export which is required for nodulation of legume roots. May be involved in other classes of oligosaccharides export. Transmembrane domains (TMD) form a pore in the inner membrane and the ATP-binding domain (NBD) is responsible for energy generation. The chain is Beta-(1--&gt;2)glucan export ATP-binding/permease protein NdvA from Rhizobium meliloti (strain 1021) (Ensifer meliloti).